Consider the following 660-residue polypeptide: Macrolide export ATP-binding/permease protein MacB (660 aa).

The ABC transporter domain occupies 10–248 (LVLENIVRKF…AKGQALQGKQ (239 aa)). Position 46-53 (46-53 (GASGSGKS)) interacts with ATP. 4 helical membrane-spanning segments follow: residues 285 to 305 (FLTMLGVIIGIAAIIAMVALG), 532 to 552 (ILTLLVSSIAAISLIVGGIGV), 593 to 613 (IIGGGVGILFGLSIGGLFVLF), and 625 to 645 (SIIISLTFSTLIGICFGFSPA).

The protein belongs to the ABC transporter superfamily. Macrolide exporter (TC 3.A.1.122) family. In terms of assembly, homodimer.

Its subcellular location is the cell inner membrane. Non-canonical ABC transporter that contains transmembrane domains (TMD), which form a pore in the inner membrane, and an ATP-binding domain (NBD), which is responsible for energy generation. Confers resistance against macrolides. The protein is Macrolide export ATP-binding/permease protein MacB of Bartonella quintana (strain Toulouse) (Rochalimaea quintana).